Consider the following 122-residue polypeptide: MIQMQTNLDVADNSGARRVQCIKVLGGSHRRYASVGDIIVVSVKEAIPRGRVKKGDVRKAVVVRTAKEVRREDGTTIRFDRNAAVILNNQGEPVGTRIFGPVVRELRAKNFMKIISLAPEVL.

It belongs to the universal ribosomal protein uL14 family. In terms of assembly, part of the 50S ribosomal subunit. Forms a cluster with proteins L3 and L19. In the 70S ribosome, L14 and L19 interact and together make contacts with the 16S rRNA in bridges B5 and B8.

Functionally, binds to 23S rRNA. Forms part of two intersubunit bridges in the 70S ribosome. This chain is Large ribosomal subunit protein uL14, found in Cereibacter sphaeroides (strain ATCC 17029 / ATH 2.4.9) (Rhodobacter sphaeroides).